A 326-amino-acid chain; its full sequence is Centriolar satellite-associated tubulin polyglutamylase complex regulator 1 (326 aa).

Residues 1 to 111 (MLSPERLALP…HCLLQLLCPD (111 aa)) are required for interaction with PCM1. A required for interaction with TPGS1, LRRC49, and TTLL1 region spans residues 1-225 (MLSPERLALP…SCPPPALVKE (225 aa)).

This sequence belongs to the CSTPP1 family. As to quaternary structure, interacts with PCM1. Interacts with TTLL1, TPGS1, TPGS2 and LRRC49; the interactions link CSTPP1 to the complex TPGC. Binds to alpha-tubulin.

Its subcellular location is the cytoplasm. It localises to the cytoskeleton. The protein localises to the microtubule organizing center. The protein resides in the centrosome. It is found in the centriolar satellite. Its function is as follows. Regulator of the tubulin polyglutamylase complex (TPGC) that controls cytoskeletal organization, nuclear shape, and cilium disassembly by balancing microtubule and actin assembly. Regulates the assembly and stability of the TPGC and thereby modulates polyglutamylation of the microtubule, which antagonizes MAP4 binding. The protein is Centriolar satellite-associated tubulin polyglutamylase complex regulator 1 (CSTPP1) of Bos taurus (Bovine).